The sequence spans 749 residues: Chitin synthase G (749 aa).

Helical transmembrane passes span 40–60 (CVGELVGIFLPVMIAILPLPP), 73–93 (VLQWFAFWAFSALLIIPWLFC), 421–441 (FMQNTIRTTALLFFILAISII), 451–471 (PVGFIAVSLGLNYILMVYFGI), and 483–503 (LMFILNPFFNWLYIVYGIFTA). The segment at 683–749 (IESGSGIPSG…RRYMQPEQMV (67 aa)) is disordered. A compositionally biased stretch (polar residues) spans 697-718 (LSSSVPQSGMQQSRAVPGNMSQ). The N-linked (GlcNAc...) asparagine glycan is linked to Asn-715. Over residues 728–742 (YTKRPSRIPRQKRRY) the composition is skewed to basic residues.

Belongs to the chitin synthase family. Class VI subfamily.

The protein localises to the cell membrane. The enzyme catalyses [(1-&gt;4)-N-acetyl-beta-D-glucosaminyl](n) + UDP-N-acetyl-alpha-D-glucosamine = [(1-&gt;4)-N-acetyl-beta-D-glucosaminyl](n+1) + UDP + H(+). Polymerizes chitin, a structural polymer of the cell wall and septum, by transferring the sugar moiety of UDP-GlcNAc to the non-reducing end of the growing chitin polymer. Plays an important role in septal growth or maintenance. Mediates colony spore formation. The protein is Chitin synthase G of Aspergillus niger (strain ATCC MYA-4892 / CBS 513.88 / FGSC A1513).